Reading from the N-terminus, the 129-residue chain is Glycine cleavage system H protein (129 aa).

The Lipoyl-binding domain occupies 24–106; the sequence is SYTVGISEHA…FGDGWFFRVM (83 aa). An N6-lipoyllysine modification is found at Lys-65.

This sequence belongs to the GcvH family. The glycine cleavage system is composed of four proteins: P, T, L and H. (R)-lipoate serves as cofactor.

Its function is as follows. The glycine cleavage system catalyzes the degradation of glycine. The H protein shuttles the methylamine group of glycine from the P protein to the T protein. This chain is Glycine cleavage system H protein, found in Shewanella halifaxensis (strain HAW-EB4).